Reading from the N-terminus, the 945-residue chain is Translation initiation factor IF-2 (945 aa).

2 disordered regions span residues 52 to 80 (RSHG…DSSG) and 96 to 357 (MKRD…FQAP). A compositionally biased stretch (acidic residues) spans 153-175 (PEPEPIVEPEPEPEPEPEPEPQP). Basic and acidic residues-rich tracts occupy residues 215 to 283 (DEER…KEAA) and 294 to 310 (AKTE…RTAR). The 170-residue stretch at 445-614 (PRAPVVTVMG…LLQAEVLELT (170 aa)) folds into the tr-type G domain. The segment at 454–461 (GHVDHGKT) is G1. A GTP-binding site is contributed by 454-461 (GHVDHGKT). The G2 stretch occupies residues 479-483 (GITQH). The G3 stretch occupies residues 500-503 (DTPG). Residues 500-504 (DTPGH) and 554-557 (NKID) each bind GTP. The tract at residues 554-557 (NKID) is G4. Residues 590-592 (SAK) are G5.

Belongs to the TRAFAC class translation factor GTPase superfamily. Classic translation factor GTPase family. IF-2 subfamily.

Its subcellular location is the cytoplasm. Functionally, one of the essential components for the initiation of protein synthesis. Protects formylmethionyl-tRNA from spontaneous hydrolysis and promotes its binding to the 30S ribosomal subunits. Also involved in the hydrolysis of GTP during the formation of the 70S ribosomal complex. The sequence is that of Translation initiation factor IF-2 from Aromatoleum aromaticum (strain DSM 19018 / LMG 30748 / EbN1) (Azoarcus sp. (strain EbN1)).